Here is a 109-residue protein sequence, read N- to C-terminus: U-scoloptoxin(16)-Ssd1a (109 aa).

A signal peptide spans 1 to 23; it reads MTTSATVIIMVLCVGSLVIFSEG.

Contains 4 disulfide bonds. As to expression, expressed by the venom gland.

Its subcellular location is the secreted. This Scolopendra dehaani (Thai centipede) protein is U-scoloptoxin(16)-Ssd1a.